The sequence spans 666 residues: Transketolase (666 aa).

Position 28 (His-28) interacts with substrate. Thiamine diphosphate is bound by residues His-68 and 116–118 (GPL). Asp-157 serves as a coordination point for Mg(2+). 2 residues coordinate thiamine diphosphate: Gly-158 and Asn-187. Asn-187 and Ile-189 together coordinate Mg(2+). Substrate contacts are provided by His-262, Arg-356, and Ser-383. His-262 lines the thiamine diphosphate pocket. The active-site Proton donor is the Glu-410. Phe-436 lines the thiamine diphosphate pocket. Residues His-460, Asp-468, and Arg-519 each coordinate substrate.

The protein belongs to the transketolase family. As to quaternary structure, homodimer. Mg(2+) is required as a cofactor. Ca(2+) serves as cofactor. Requires Mn(2+) as cofactor. The cofactor is Co(2+). It depends on thiamine diphosphate as a cofactor.

The catalysed reaction is D-sedoheptulose 7-phosphate + D-glyceraldehyde 3-phosphate = aldehydo-D-ribose 5-phosphate + D-xylulose 5-phosphate. In terms of biological role, catalyzes the transfer of a two-carbon ketol group from a ketose donor to an aldose acceptor, via a covalent intermediate with the cofactor thiamine pyrophosphate. The protein is Transketolase (tkt) of Halalkalibacterium halodurans (strain ATCC BAA-125 / DSM 18197 / FERM 7344 / JCM 9153 / C-125) (Bacillus halodurans).